Reading from the N-terminus, the 407-residue chain is Putative two-component response regulator ARR19 (407 aa).

One can recognise a Response regulatory domain in the interval 35-150; sequence NVLVVDTNFT…VMANIWQHIV (116 aa). The residue at position 86 (D86) is a 4-aspartylphosphate. A Nuclear localization signal motif is present at residues 214 to 217; it reads RKPR. The myb-like GARP DNA-binding region spans 217–271; the sequence is RMTWTEELHQKFLEAIEIIGGIEKANPKVLVECLQEMRIEGITRSNVASHLQKHR.

The protein belongs to the ARR family. Type-B subfamily. Binds the target DNA as a monomer. In terms of processing, two-component system major event consists of a His-to-Asp phosphorelay between a sensor histidine kinase (HK) and a response regulator (RR). In plants, the His-to-Asp phosphorelay involves an additional intermediate named Histidine-containing phosphotransfer protein (HPt). This multistep phosphorelay consists of a His-Asp-His-Asp sequential transfer of a phosphate group between first a His and an Asp of the HK protein, followed by the transfer to a conserved His of the HPt protein and finally the transfer to an Asp in the receiver domain of the RR protein. Detected in trichomes and siliques.

The protein localises to the nucleus. Putative transcriptional activator that binds specifically to the DNA sequence 5'-[AG]GATT-3'. Functions as a response regulator involved in His-to-Asp phosphorelay signal transduction system. Phosphorylation of the Asp residue in the receiver domain activates the ability of the protein to promote the transcription of target genes. Could directly activate some type-A response regulators in response to cytokinins. The sequence is that of Putative two-component response regulator ARR19 (ARR19) from Arabidopsis thaliana (Mouse-ear cress).